The chain runs to 434 residues: RNA-binding protein SRO9 (434 aa).

Residues 1–13 (MSAETAAANTATA) show a composition bias toward low complexity. The disordered stretch occupies residues 1–243 (MSAETAAANT…FHHNQQHPQQ (243 aa)). Polar residues predominate over residues 26 to 41 (SKQVNLTPAPLPTSSP). At Ser-55 the chain carries Phosphoserine. The span at 93–124 (KRSGSKNGASNGNSNKSKNNKTAASSTSSSNA) shows a compositional bias: low complexity. Basic residues predominate over residues 125 to 140 (NRKKKHHQHNAKKQQQ). The residue at position 148 (Ser-148) is a Phosphoserine. Lys-156 participates in a covalent cross-link: Glycyl lysine isopeptide (Lys-Gly) (interchain with G-Cter in ubiquitin). The segment covering 158 to 167 (ATSQENGQST) has biased composition (polar residues). Residues 173–195 (PHHRNHHHSHHHNSNGPQRRKFH) show a composition bias toward basic residues. Positions 196–208 (NSNNAGMPQNQGF) are enriched in polar residues. Positions 218–227 (RNARNNNNNR) are enriched in low complexity. The segment covering 228-238 (SKYHNHFHHNQ) has biased composition (basic residues). Residues 255 to 351 (VQPVLMAINN…KEGDNVTGEA (97 aa)) enclose the HTH La-type RNA-binding domain. Glycyl lysine isopeptide (Lys-Gly) (interchain with G-Cter in ubiquitin) cross-links involve residues Lys-301, Lys-342, and Lys-352. The segment at 396–434 (SLPPVPQQEEESSTELASQEQETKEDSAPVAAGESESSL) is disordered. Ser-422 carries the post-translational modification Phosphoserine.

In terms of assembly, interacts with HAP1. Component of the HMC including HAP1, SRO9 and YDJ1.

It localises to the cytoplasm. Functionally, may overlap in function with tropomyosin and may be involved in organization of actin filaments. Acts as a multicopy suppressor of RHO3 mutation. RNA-binding protein which may modulate mRNA translation. Involved in heme regulation of HAP1, as a component of the high-molecular-weight complex (HMC). The protein is RNA-binding protein SRO9 (SRO9) of Saccharomyces cerevisiae (strain ATCC 204508 / S288c) (Baker's yeast).